Reading from the N-terminus, the 223-residue chain is MKRTKSIHHASFRKSWSARHLTPVALAVTAVFMLAGCEKSDETVSLYQNADDCSAANPGKSAECTTAYNNALKEAERTAPKYATREDCVAEFGEGQCQQAPAQAGMAPENQAQAQQSSGSFWMPLMAGYMMGRLMGGGAGFAQQPLFSSKNPASPAYGKYTDAAGKNYGAAQPGRTMTVPKTAMAPKPATTTTVTRGGFGESVAKQSTMQRSAAGTSTRSMGG.

Over residues 178 to 195 (TVPKTAMAPKPATTTTVT) the composition is skewed to low complexity. The segment at 178–223 (TVPKTAMAPKPATTTTVTRGGFGESVAKQSTMQRSAAGTSTRSMGG) is disordered. Residues 204 to 223 (AKQSTMQRSAAGTSTRSMGG) show a composition bias toward polar residues.

The protein belongs to the UPF0441 family.

This chain is UPF0441 protein YgiB, found in Salmonella paratyphi B (strain ATCC BAA-1250 / SPB7).